We begin with the raw amino-acid sequence, 781 residues long: DNA translocase FtsK 2 (781 aa).

4 helical membrane passes run 24–44 (LLGE…LTIL), 74–94 (FADV…LLLL), 120–140 (AGVT…LEAI), and 170–190 (GFTG…SLFF). Residues 191 to 781 (HFSWLNLAEQ…NRNGNVVEEE (591 aa)) lie on the Cytoplasmic side of the membrane. One can recognise a FtsK domain in the interval 414 to 623 (GKPVVADLAK…FQVSSKIDSR (210 aa)). ATP is bound at residue 434-439 (GSGKSV).

The protein belongs to the FtsK/SpoIIIE/SftA family. Homohexamer. Forms a ring that surrounds DNA.

The protein localises to the cell inner membrane. Essential cell division protein that coordinates cell division and chromosome segregation. The N-terminus is involved in assembly of the cell-division machinery. The C-terminus functions as a DNA motor that moves dsDNA in an ATP-dependent manner towards the dif recombination site, which is located within the replication terminus region. Translocation stops specifically at Xer-dif sites, where FtsK interacts with the Xer recombinase, allowing activation of chromosome unlinking by recombination. FtsK orienting polar sequences (KOPS) guide the direction of DNA translocation. FtsK can remove proteins from DNA as it translocates, but translocation stops specifically at XerCD-dif site, thereby preventing removal of XerC and XerD from dif. This Ralstonia nicotianae (strain ATCC BAA-1114 / GMI1000) (Ralstonia solanacearum) protein is DNA translocase FtsK 2 (ftsK2).